We begin with the raw amino-acid sequence, 416 residues long: Serine hydroxymethyltransferase (416 aa).

Residues Leu121 and 125–127 (GHL) contribute to the (6S)-5,6,7,8-tetrahydrofolate site. Lys229 is subject to N6-(pyridoxal phosphate)lysine.

The protein belongs to the SHMT family. As to quaternary structure, homodimer. Pyridoxal 5'-phosphate serves as cofactor.

Its subcellular location is the cytoplasm. The catalysed reaction is (6R)-5,10-methylene-5,6,7,8-tetrahydrofolate + glycine + H2O = (6S)-5,6,7,8-tetrahydrofolate + L-serine. Its pathway is one-carbon metabolism; tetrahydrofolate interconversion. It functions in the pathway amino-acid biosynthesis; glycine biosynthesis; glycine from L-serine: step 1/1. Catalyzes the reversible interconversion of serine and glycine with tetrahydrofolate (THF) serving as the one-carbon carrier. This reaction serves as the major source of one-carbon groups required for the biosynthesis of purines, thymidylate, methionine, and other important biomolecules. Also exhibits THF-independent aldolase activity toward beta-hydroxyamino acids, producing glycine and aldehydes, via a retro-aldol mechanism. This is Serine hydroxymethyltransferase from Neisseria meningitidis serogroup A / serotype 4A (strain DSM 15465 / Z2491).